The chain runs to 240 residues: UDP-2,3-diacylglucosamine hydrolase (240 aa).

Positions 8, 10, 41, 78, and 113 each coordinate Mn(2+). 78-79 (NR) provides a ligand contact to substrate. Substrate is bound by residues aspartate 121, serine 159, asparagine 163, lysine 166, and histidine 194. Residues histidine 194 and histidine 196 each contribute to the Mn(2+) site.

This sequence belongs to the LpxH family. Requires Mn(2+) as cofactor.

It localises to the cell inner membrane. The enzyme catalyses UDP-2-N,3-O-bis[(3R)-3-hydroxytetradecanoyl]-alpha-D-glucosamine + H2O = 2-N,3-O-bis[(3R)-3-hydroxytetradecanoyl]-alpha-D-glucosaminyl 1-phosphate + UMP + 2 H(+). It participates in glycolipid biosynthesis; lipid IV(A) biosynthesis; lipid IV(A) from (3R)-3-hydroxytetradecanoyl-[acyl-carrier-protein] and UDP-N-acetyl-alpha-D-glucosamine: step 4/6. In terms of biological role, hydrolyzes the pyrophosphate bond of UDP-2,3-diacylglucosamine to yield 2,3-diacylglucosamine 1-phosphate (lipid X) and UMP by catalyzing the attack of water at the alpha-P atom. Involved in the biosynthesis of lipid A, a phosphorylated glycolipid that anchors the lipopolysaccharide to the outer membrane of the cell. The protein is UDP-2,3-diacylglucosamine hydrolase of Shewanella baltica (strain OS185).